A 553-amino-acid polypeptide reads, in one-letter code: Glutamate--tRNA ligase (553 aa).

A 'HIGH' region motif is present at residues 103-113 (PNPSGPLHIGH).

It belongs to the class-I aminoacyl-tRNA synthetase family. Glutamate--tRNA ligase type 2 subfamily.

It is found in the cytoplasm. The enzyme catalyses tRNA(Glu) + L-glutamate + ATP = L-glutamyl-tRNA(Glu) + AMP + diphosphate. Catalyzes the attachment of glutamate to tRNA(Glu) in a two-step reaction: glutamate is first activated by ATP to form Glu-AMP and then transferred to the acceptor end of tRNA(Glu). The polypeptide is Glutamate--tRNA ligase (Methanothermobacter thermautotrophicus (strain ATCC 29096 / DSM 1053 / JCM 10044 / NBRC 100330 / Delta H) (Methanobacterium thermoautotrophicum)).